Reading from the N-terminus, the 532-residue chain is Probable cytochrome c oxidase subunit 1 (532 aa).

The next 8 membrane-spanning stretches (helical) occupy residues 33 to 53 (IMYI…SLLF), 74 to 94 (VLIT…ALFG), 95 to 115 (GFGN…FPRL), 118 to 138 (ISFW…FVDG), 163 to 183 (MAIF…INLI), 200 to 220 (PLFV…MPVL), 252 to 272 (LFWF…FGIV), and 284 to 304 (IFGY…GFIV). His-79 serves as a coordination point for Fe(II)-heme a. Residues His-258 and Tyr-262 each contribute to the Cu cation site. Residues His-307 and His-308 each coordinate Cu cation. 2 helical membrane passes run 318-338 (ALIY…IKIF) and 355-375 (MLFS…GIIL). Heme a3 is bound at residue His-393. A run of 3 helical transmembrane segments spans residues 394–414 (FHYT…YYWF), 431–451 (FWIT…LGLA), and 473–493 (IGAG…FYTL). His-395 is a binding site for Fe(II)-heme a.

The protein belongs to the heme-copper respiratory oxidase family.

It localises to the cell membrane. It carries out the reaction 4 Fe(II)-[cytochrome c] + O2 + 8 H(+)(in) = 4 Fe(III)-[cytochrome c] + 2 H2O + 4 H(+)(out). It functions in the pathway energy metabolism; oxidative phosphorylation. In terms of biological role, cytochrome c oxidase is the component of the respiratory chain that catalyzes the reduction of oxygen to water. Subunits 1-3 form the functional core of the enzyme complex. CO I is the catalytic subunit of the enzyme. Electrons originating in cytochrome c are transferred via the copper A center of subunit 2 and heme A of subunit 1 to the bimetallic center formed by heme A3 and copper B. This Rickettsia conorii (strain ATCC VR-613 / Malish 7) protein is Probable cytochrome c oxidase subunit 1 (ctaD).